The sequence spans 312 residues: Urease accessory protein 7 (312 aa).

Positions 28–86 (QEATGTDSHHAHHHHTPSGASSAISHTHDNMPHDHGQFHDHGPGLWTPEEHGHTHEHLE) are disordered. The tract at residues 36-87 (HHAHHHHTPSGASSAISHTHDNMPHDHGQFHDHGPGLWTPEEHGHTHEHLEH) is histine rich nickel-binding domain. The span at 53 to 86 (HTHDNMPHDHGQFHDHGPGLWTPEEHGHTHEHLE) shows a compositional bias: basic and acidic residues. Residues 115-122 (GPVGSGKT) carry the GTP binding P-loop motif. A Switch domain 1 motif is present at residues 147 to 154 (TREDQEFL). Residues 171-172 (GG) carry the switch domain 2 motif.

The protein belongs to the SIMIBI class G3E GTPase family. UreG subfamily. URE4, URE6 and URE7 may form a complex that acts as a GTP-hydrolysis-dependent molecular chaperone, activating the urease apoprotein URE1.

Urease accessory protein that binds 2 nickel atoms likely via its conserved histidine-rich domain and supplies nickel for the functional urease URE1. Has probably a dual function as a nickel chaperone and GTPase. Plays a role in host brain invasion. This is Urease accessory protein 7 from Cryptococcus neoformans var. grubii serotype A (strain H99 / ATCC 208821 / CBS 10515 / FGSC 9487) (Filobasidiella neoformans var. grubii).